The following is a 250-amino-acid chain: Large ribosomal subunit protein uL4 (250 aa).

Disordered stretches follow at residues Met1–Arg20 and Tyr51–Asp101. Positions Pro92 to Asp101 are enriched in basic and acidic residues.

This sequence belongs to the universal ribosomal protein uL4 family. Part of the 50S ribosomal subunit.

Functionally, one of the primary rRNA binding proteins, this protein initially binds near the 5'-end of the 23S rRNA. It is important during the early stages of 50S assembly. It makes multiple contacts with different domains of the 23S rRNA in the assembled 50S subunit and ribosome. Its function is as follows. Forms part of the polypeptide exit tunnel. In Halobacterium salinarum (strain ATCC 29341 / DSM 671 / R1), this protein is Large ribosomal subunit protein uL4.